The sequence spans 702 residues: Putative GMC-type oxidoreductase R135 (702 aa).

The chain crosses the membrane as a helical span at residues 55 to 75 (LTGDIVIIGAGAAGSLLAHYL). An FAD-binding site is contributed by 58 to 88 (DIVIIGAGAAGSLLAHYLARFSNMKIILLEA). Residue histidine 628 is part of the active site.

It belongs to the GMC oxidoreductase family. FAD is required as a cofactor.

The protein localises to the virion. Its subcellular location is the host membrane. This is Putative GMC-type oxidoreductase R135 from Acanthamoeba polyphaga (Amoeba).